The chain runs to 191 residues: Fe/S biogenesis protein NfuA (191 aa).

Residues Cys149 and Cys152 each contribute to the [4Fe-4S] cluster site.

Belongs to the NfuA family. Homodimer. The cofactor is [4Fe-4S] cluster.

Functionally, involved in iron-sulfur cluster biogenesis. Binds a 4Fe-4S cluster, can transfer this cluster to apoproteins, and thereby intervenes in the maturation of Fe/S proteins. Could also act as a scaffold/chaperone for damaged Fe/S proteins. The protein is Fe/S biogenesis protein NfuA of Serratia proteamaculans (strain 568).